The chain runs to 496 residues: RNA-binding motif protein, Y chromosome, family 1 member F/J (496 aa).

Positions 8–85 constitute an RRM domain; the sequence is GKLFIGGLNR…KAIKVEQAKK (78 aa). Disordered stretches follow at residues 81–345 and 452–496; these read EQAK…YAPP and KDQR…SSRY. Composition is skewed to low complexity over residues 97–114 and 149–159; these read PASS…SARG and PVKRGPSSRSG. Polar residues predominate over residues 175-184; the sequence is NSWMGSQGPM. Composition is skewed to basic and acidic residues over residues 204 to 214, 242 to 253, 276 to 289, 313 to 326, 335 to 345, and 484 to 496; these read RNDRMSTRHDG, DNGHSNRDEHSS, AYRD…DESY, GYRD…HESY, SSRETRDYAPP, and GESR…SSRY.

Interacts with splicing factor proteins SFRS3/SRP20, TRA2B/SFRS10, KHDRBS1/SAM68 and KHDRBS3. As to expression, testis-specific.

It is found in the nucleus. Functionally, RNA-binding protein which may be involved in spermatogenesis. Required for sperm development, possibly by participating in pre-mRNA splicing in the testis. The chain is RNA-binding motif protein, Y chromosome, family 1 member F/J (RBMY1F) from Homo sapiens (Human).